Consider the following 70-residue polypeptide: Guanine nucleotide-binding protein subunit gamma-1 (70 aa).

The residue at position 67 (cysteine 67) is a Cysteine methyl ester. Cysteine 67 carries S-geranylgeranyl cysteine lipidation. Positions 68 to 70 (TVL) are cleaved as a propeptide — removed in mature form.

The protein belongs to the G protein gamma family. As to quaternary structure, g proteins are composed of 3 units, alpha, beta and gamma. As to expression, predominantly expressed in the central nervous system.

It localises to the cell membrane. Functionally, guanine nucleotide-binding proteins (G proteins) are involved as a modulator or transducer in various transmembrane signaling systems. The beta and gamma chains are required for the GTPase activity, for replacement of GDP by GTP, and for G protein-effector interaction. The polypeptide is Guanine nucleotide-binding protein subunit gamma-1 (Ggamma1) (Drosophila melanogaster (Fruit fly)).